Reading from the N-terminus, the 1088-residue chain is RNA-directed RNA polymerase (1088 aa).

Residues 501 to 687 (LSYGDVTRFL…AKRYIAGGKI (187 aa)) form the RdRp catalytic domain.

Belongs to the reoviridae RNA-directed RNA polymerase family. Interacts with VP3 (Potential). Interacts with VP2; this interaction activates VP1. Interacts with NSP5; this interaction is probably necessary for the formation of functional virus factories. Interacts with NSP2; this interaction is weak. The cofactor is Mg(2+).

The protein resides in the virion. It carries out the reaction RNA(n) + a ribonucleoside 5'-triphosphate = RNA(n+1) + diphosphate. In terms of biological role, RNA-directed RNA polymerase that is involved in both transcription and genome replication. Together with VP3 capping enzyme, forms an enzyme complex positioned near the channels situated at each of the five-fold vertices of the core. Following infection, the outermost layer of the virus is lost, leaving a double-layered particle (DLP) made up of the core and VP6 shell. VP1 then catalyzes the transcription of fully conservative plus-strand genomic RNAs that are extruded through the DLP's channels into the cytoplasm where they function as mRNAs for translation of viral proteins. One copy of each of the viral (+)RNAs is also recruited during core assembly, together with newly synthesized polymerase complexes and VP2. The polymerase of these novo-formed particles catalyzes the synthesis of complementary minus-strands leading to dsRNA formation. To do so, the polymerase specifically recognizes and binds 4 bases 5'-UGUG-3' in the conserved 3'-sequence of plus-strand RNA templates. VP2 presumably activates the autoinhibited VP1-RNA complex to coordinate packaging and genome replication. Once dsRNA synthesis is complete, the polymerase switches to the transcriptional mode, thus providing secondary transcription. The chain is RNA-directed RNA polymerase from Rotavirus A (strain RVA/Cow/United States/NCDV-Lincoln/1969/G6P6[1]) (RV-A).